Consider the following 404-residue polypeptide: MKLPIYLDYSATTPVDPRVAEKMMQCLTIDGIFGNPASRSHRFGWQAEEAIDIARNQIADLIGADPREIVFTSGATEADNLALKGVANFYQKKGKHIITSKTEHKAILDTCRQLEREGFEVTYLAPKSDGLIDLKELEAAMRDDTILVSIMHVNNEIGVVQDIAAIGELCRSKGIIYHVDATQSVGKLPIDLSKLKVDLLSLSAHKVYGPMGIGALYVRRKPRIRLEAQMHGGGHERGMRSGTLAVHQIVGMGEAYRILKEEMADETKRLNELRLRLWNGIKDIEEVYINGSLEHTAPNILNVSFNYVEGESLMMALKDLAVSSGSACTSASLEPSYVLRALGLTDELAHSSIRFSLGRFTTEEEIDYAIEQIHSAIGRLRDLSPLWEMHKQGVDINSIEWSHH.

Pyridoxal 5'-phosphate contacts are provided by residues 75–76 (AT), Asn155, Gln183, and 203–205 (SAH). At Lys206 the chain carries N6-(pyridoxal phosphate)lysine. Residue Thr243 coordinates pyridoxal 5'-phosphate. The Cysteine persulfide intermediate role is filled by Cys328. Cys328 contributes to the [2Fe-2S] cluster binding site.

Belongs to the class-V pyridoxal-phosphate-dependent aminotransferase family. NifS/IscS subfamily. As to quaternary structure, homodimer. Forms a heterotetramer with IscU, interacts with other sulfur acceptors. Pyridoxal 5'-phosphate serves as cofactor.

It localises to the cytoplasm. It carries out the reaction (sulfur carrier)-H + L-cysteine = (sulfur carrier)-SH + L-alanine. The protein operates within cofactor biosynthesis; iron-sulfur cluster biosynthesis. In terms of biological role, master enzyme that delivers sulfur to a number of partners involved in Fe-S cluster assembly, tRNA modification or cofactor biosynthesis. Catalyzes the removal of elemental sulfur atoms from cysteine to produce alanine. Functions as a sulfur delivery protein for Fe-S cluster synthesis onto IscU, an Fe-S scaffold assembly protein, as well as other S acceptor proteins. This is Cysteine desulfurase IscS from Proteus mirabilis (strain HI4320).